A 386-amino-acid polypeptide reads, in one-letter code: Glucose-1-phosphate adenylyltransferase (386 aa).

Alpha-D-glucose 1-phosphate-binding positions include tyrosine 100, glycine 165, 180 to 181 (EK), and serine 191.

Belongs to the bacterial/plant glucose-1-phosphate adenylyltransferase family. Homotetramer.

It carries out the reaction alpha-D-glucose 1-phosphate + ATP + H(+) = ADP-alpha-D-glucose + diphosphate. Its pathway is glycan biosynthesis; glycogen biosynthesis. In terms of biological role, involved in the biosynthesis of ADP-glucose, a building block required for the elongation reactions to produce glycogen. Catalyzes the reaction between ATP and alpha-D-glucose 1-phosphate (G1P) to produce pyrophosphate and ADP-Glc. This is Glucose-1-phosphate adenylyltransferase from Clostridium botulinum (strain Eklund 17B / Type B).